Consider the following 560-residue polypeptide: Excitatory amino acid transporter 5 (560 aa).

Residues 1–16 (MVPHAILARGRDVCRR) are Cytoplasmic-facing. Transmembrane regions (helical) follow at residues 17 to 37 (NGLL…GFFL), 60 to 80 (MLKM…LASL), and 94 to 114 (AYYL…VSII). Topologically, residues 115-216 (HPGSAAQKET…EVVYKSEPGT (102 aa)) are extracellular. N-linked (GlcNAc...) asparagine glycosylation is present at asparagine 191. Transmembrane regions (helical) follow at residues 217 to 237 (SDGM…IMLG), 260 to 280 (IVAV…AGKI), 300 to 320 (VVCG…FFIT), 330 to 350 (GILQ…TLPI), 372 to 392 (VGAT…AIFI), 414 to 434 (AASI…VIVL), and 457 to 477 (FRTM…AHIC).

The protein belongs to the dicarboxylate/amino acid:cation symporter (DAACS) (TC 2.A.23) family. SLC1A7 subfamily. As to quaternary structure, interacts with the PDZ domains of DLG4. Expressed primarily in retina. Detectable in liver, heart, muscle and brain.

The protein localises to the photoreceptor inner segment membrane. It localises to the synaptic cell membrane. It catalyses the reaction K(+)(in) + L-glutamate(out) + 3 Na(+)(out) + H(+)(out) = K(+)(out) + L-glutamate(in) + 3 Na(+)(in) + H(+)(in). It carries out the reaction K(+)(in) + L-aspartate(out) + 3 Na(+)(out) + H(+)(out) = K(+)(out) + L-aspartate(in) + 3 Na(+)(in) + H(+)(in). The enzyme catalyses D-aspartate(out) + K(+)(in) + 3 Na(+)(out) + H(+)(out) = D-aspartate(in) + K(+)(out) + 3 Na(+)(in) + H(+)(in). Sodium-dependent, high-affinity amino acid transporter that mediates the uptake of L-glutamate and also L-aspartate and D-aspartate. Functions as a symporter that transports one amino acid molecule together with two or three Na(+) ions and one proton, in parallel with the counter-transport of one K(+) ion. Acts primarily as an inhibitory glutamate-gated chloride channel being a major inhibitory presynaptic receptor at mammalian rod bipolar cell axon terminals. Glutamate binding gates a large Cl(-) conductance that mediates inhibition, affecting visual processing in the retina. The protein is Excitatory amino acid transporter 5 of Homo sapiens (Human).